Here is a 164-residue protein sequence, read N- to C-terminus: C-phycoerythrin alpha chain (164 aa).

Residues cysteine 82 and cysteine 139 each contribute to the (2R,3E)-phycoerythrobilin site.

The protein belongs to the phycobiliprotein family. Heterodimer of an alpha and a beta chain. In terms of processing, contains two covalently linked bilin chromophores.

It localises to the cellular thylakoid membrane. Its function is as follows. Light-harvesting photosynthetic bile pigment-protein from the phycobiliprotein complex. The chain is C-phycoerythrin alpha chain (cpeA) from Synechocystis sp. (strain PCC 6701).